Reading from the N-terminus, the 247-residue chain is Triosephosphate isomerase (247 aa).

Positions 10 and 12 each coordinate substrate. The active-site Electrophile is the His94. The active-site Proton acceptor is Glu164.

Belongs to the triosephosphate isomerase family. Homodimer.

The protein localises to the cytoplasm. The catalysed reaction is D-glyceraldehyde 3-phosphate = dihydroxyacetone phosphate. The enzyme catalyses dihydroxyacetone phosphate = methylglyoxal + phosphate. It participates in carbohydrate biosynthesis; gluconeogenesis. It functions in the pathway carbohydrate degradation; glycolysis; D-glyceraldehyde 3-phosphate from glycerone phosphate: step 1/1. Functionally, triosephosphate isomerase is an extremely efficient metabolic enzyme that catalyzes the interconversion between dihydroxyacetone phosphate (DHAP) and D-glyceraldehyde-3-phosphate (G3P) in glycolysis and gluconeogenesis. It is also responsible for the non-negligible production of methylglyoxal a reactive cytotoxic side-product that modifies and can alter proteins, DNA and lipids. The protein is Triosephosphate isomerase of Latimeria chalumnae (Coelacanth).